Consider the following 451-residue polypeptide: MKTNSEIENRMQDIEYALLGKALVFEDCTEYILRQLVNYEFKCSRHKNIFIVFKHLKDNALPITVDSAWEELLRRRVKDIDKSYLGIMLHDAMFNDKLRPISHTVLLDDLSVCSAEENLTNFIFRSFNEYNENPLRRSPFLLLDRIKDRLDRTIAKTFSTRSVRGRSVYDIFSQAELGVLARIKKRRAAYSENNDSFYDGLPTGYQDIDSKGVILANGNFVIIAARPSIGKTALAIDIAINIAIHQRRRVGFLSLEMSAGQIVERIISNLTGVSGEKLQRGSLSEEEIFCIEEAGNTIRDSHLYICSDNQYKLNLIANQIRLLKRDDRVDVIFIDYLQLINSSVGENRQNEIADISRTLRGLAAELNIPIVCLSQLSRKVEDRANKVPMLSDLRDSGQIEQDADVILFINRKETSPNCEITVGKNRHGSVFSTVLQFDPKTSKFSAIKKVW.

One can recognise an SF4 helicase domain in the interval 194 to 451 (NDSFYDGLPT…SKFSAIKKVW (258 aa)). Residue 225–232 (ARPSIGKT) coordinates ATP.

This sequence belongs to the helicase family. DnaB subfamily. Homohexamer.

The enzyme catalyses Couples ATP hydrolysis with the unwinding of duplex DNA at the replication fork by translocating in the 5'-3' direction. This creates two antiparallel DNA single strands (ssDNA). The leading ssDNA polymer is the template for DNA polymerase III holoenzyme which synthesizes a continuous strand.. The catalysed reaction is ATP + H2O = ADP + phosphate + H(+). In terms of biological role, a replicative DNA helicase, it participates in initiation and elongation during DNA replication. Travels ahead of the DNA replisome, separating dsDNA into templates for DNA synthesis. A processive ATP-dependent 5'-3' DNA helicase it has DNA-dependent ATPase activity. This Chlamydia muridarum (strain MoPn / Nigg) protein is Probable plasmid replicative DNA helicase.